The following is a 705-amino-acid chain: 1,4-alpha-glucan branching enzyme GlgB (705 aa).

Asp-309 acts as the Nucleophile in catalysis. Glu-360 functions as the Proton donor in the catalytic mechanism. Residues 654-705 are disordered; it reads VQVERAADPRPNEQQRLVAETPAHEGGRSAPADAAESAEQKPDDEQKGGKKA. The segment covering 691-705 has biased composition (basic and acidic residues); sequence AEQKPDDEQKGGKKA.

It belongs to the glycosyl hydrolase 13 family. GlgB subfamily. As to quaternary structure, monomer.

It carries out the reaction Transfers a segment of a (1-&gt;4)-alpha-D-glucan chain to a primary hydroxy group in a similar glucan chain.. The protein operates within glycan biosynthesis; glycogen biosynthesis. Its function is as follows. Catalyzes the formation of the alpha-1,6-glucosidic linkages in glycogen by scission of a 1,4-alpha-linked oligosaccharide from growing alpha-1,4-glucan chains and the subsequent attachment of the oligosaccharide to the alpha-1,6 position. This is 1,4-alpha-glucan branching enzyme GlgB from Deinococcus radiodurans (strain ATCC 13939 / DSM 20539 / JCM 16871 / CCUG 27074 / LMG 4051 / NBRC 15346 / NCIMB 9279 / VKM B-1422 / R1).